The sequence spans 531 residues: Cytochrome P450 monooxygenase peniB (531 aa).

A helical transmembrane segment spans residues 30–48; sequence ILSIAAVVFLGYLLLRPLF. A heme-binding site is contributed by Cys445.

It belongs to the cytochrome P450 family. Heme is required as a cofactor.

It is found in the membrane. The enzyme catalyses silphinene-15-oate + 2 reduced [NADPH--hemoprotein reductase] + 2 O2 = gamma-lactone-2-keto[5.5.5.5]fenestrane + 2 oxidized [NADPH--hemoprotein reductase] + 3 H2O + H(+). Its pathway is secondary metabolite biosynthesis; terpenoid biosynthesis. Its function is as follows. Cytochrome P450 monooxygenase; part of the gene cluster that mediates the biosynthesis of penifulvin A, a potent insecticidal sesquiterpene that features a [5.5.5.6]dioxafenestrane ring. Within the pathway, peniB catalyzes the multi-step oxidation of silphinene to synthesize gamma-lactone-2-keto[5.5.5.5]fenestrane, including oxidation of the C15 methylgroup in silphinene to form silphinene-15-oic acid, activationof the C1-C2 double bond to form the gamma-lactone-2-hydroxy[5.5.5.5]fenestrane, and dehydrogenation of the hydroxy group at C2 of gamma-lactone-2-hydroxy[5.5.5.5]fenestrane to generate gamma-lactone-2-keto[5.5.5.5]fenestrane. The first step of the pathway is performed by the sesquiterpene cyclase peniA that generates the angular triquinane scaffold silphinene via cyclization of the linear farnesyl pyrophosphate (FPP). The cytochrome P450 monooxygenase peniB and the flavin-dependent monooxygenase peniC then catalyze a series of oxidation reactions to transform silphinene into penifulvin A. The protein is Cytochrome P450 monooxygenase peniB of Penicillium patulum (Penicillium griseofulvum).